Reading from the N-terminus, the 83-residue chain is Small ribosomal subunit protein bS20 (83 aa).

This sequence belongs to the bacterial ribosomal protein bS20 family.

Binds directly to 16S ribosomal RNA. The chain is Small ribosomal subunit protein bS20 from Lactobacillus delbrueckii subsp. bulgaricus (strain ATCC 11842 / DSM 20081 / BCRC 10696 / JCM 1002 / NBRC 13953 / NCIMB 11778 / NCTC 12712 / WDCM 00102 / Lb 14).